The sequence spans 390 residues: Succinyl-diaminopimelate desuccinylase (390 aa).

A Zn(2+)-binding site is contributed by His-74. Asp-76 is an active-site residue. Asp-107 is a Zn(2+) binding site. Residue Glu-140 is the Proton acceptor of the active site. 3 residues coordinate Zn(2+): Glu-141, Glu-169, and His-363.

This sequence belongs to the peptidase M20A family. DapE subfamily. In terms of assembly, homodimer. Zn(2+) is required as a cofactor. Requires Co(2+) as cofactor.

It catalyses the reaction N-succinyl-(2S,6S)-2,6-diaminopimelate + H2O = (2S,6S)-2,6-diaminopimelate + succinate. It participates in amino-acid biosynthesis; L-lysine biosynthesis via DAP pathway; LL-2,6-diaminopimelate from (S)-tetrahydrodipicolinate (succinylase route): step 3/3. Its function is as follows. Catalyzes the hydrolysis of N-succinyl-L,L-diaminopimelic acid (SDAP), forming succinate and LL-2,6-diaminopimelate (DAP), an intermediate involved in the bacterial biosynthesis of lysine and meso-diaminopimelic acid, an essential component of bacterial cell walls. The protein is Succinyl-diaminopimelate desuccinylase of Bartonella quintana (strain Toulouse) (Rochalimaea quintana).